A 338-amino-acid chain; its full sequence is Fructose-1,6-bisphosphatase class 1 1 (338 aa).

Positions 91, 113, 115, and 116 each coordinate Mg(2+). Substrate contacts are provided by residues 116–119 (DGSS), asparagine 208, and lysine 274. Residue glutamate 280 participates in Mg(2+) binding.

It belongs to the FBPase class 1 family. Homotetramer. Mg(2+) is required as a cofactor.

The protein resides in the cytoplasm. It carries out the reaction beta-D-fructose 1,6-bisphosphate + H2O = beta-D-fructose 6-phosphate + phosphate. It participates in carbohydrate biosynthesis; gluconeogenesis. In Cupriavidus taiwanensis (strain DSM 17343 / BCRC 17206 / CCUG 44338 / CIP 107171 / LMG 19424 / R1) (Ralstonia taiwanensis (strain LMG 19424)), this protein is Fructose-1,6-bisphosphatase class 1 1.